Reading from the N-terminus, the 976-residue chain is Vacuolar membrane protease (976 aa).

Residues 1–15 (MKLKSVFRSVLKYRK) lie on the Cytoplasmic side of the membrane. The chain crosses the membrane as a helical span at residues 16–36 (TNLSLLLLITYSIITLLYIFD). Residues 37 to 359 (HERYKLNLPK…KFFVISAKTL (323 aa)) lie on the Vacuolar side of the membrane. N-linked (GlcNAc...) asparagine glycans are attached at residues Asn96 and Asn121. The Zn(2+) site is built by His156 and Asp168. Asn189 carries an N-linked (GlcNAc...) asparagine glycan. The active-site Proton acceptor is the Glu200. Glu201 contacts Zn(2+). N-linked (GlcNAc...) asparagine glycosylation is found at Asn212 and Asn217. The Zn(2+) site is built by Glu226 and His300. A helical membrane pass occupies residues 360-380 (FYWNCIFLLVSPVVAIGLYLI). The Cytoplasmic segment spans residues 381–392 (SRDRMTWKSHSW). The chain crosses the membrane as a helical span at residues 393 to 412 (LSWTRFPLSLAAGIIVQKLF). At 413–428 (SNDIIRSNPLTFSRNY) the chain is on the vacuolar side. Residues 429-449 (FWPISAFFTQVIFTSYVLINC) traverse the membrane as a helical segment. The Cytoplasmic segment spans residues 450–461 (SNFFFPCADMKS). The helical transmembrane segment at 462 to 482 (LSIIELFIILWTILLFTSKLL) threads the bilayer. Residues 483–496 (YSSDYRYTGLYPLS) lie on the Vacuolar side of the membrane. The chain crosses the membrane as a helical span at residues 497–517 (IFFLLSTIAAILRLLALALGM). The Cytoplasmic portion of the chain corresponds to 518 to 627 (RTRKRLGREC…NSLKLEYTDY (110 aa)). Residues 528–610 (RDHHSNYSSH…PLLKGSNSME (83 aa)) are disordered. The span at 549–558 (NLEQPQDQFT) shows a compositional bias: polar residues. Residues 559–570 (SSQDDQASIQDD) show a composition bias toward low complexity. Residues 582 to 601 (NVDEDHGMDSSSQQHDERVP) show a composition bias toward basic and acidic residues. Residues 628–648 (AWIIQFLLIVPIPSFILFNSV) traverse the membrane as a helical segment. Topologically, residues 649 to 668 (DVIMDALNHTVQEGSKATFD) are vacuolar. Asn656 is a glycosylation site (N-linked (GlcNAc...) asparagine). Residues 669 to 689 (VLRFGMVGSILIALPILPFFY) form a helical membrane-spanning segment. Residues 690-692 (KVN) lie on the Cytoplasmic side of the membrane. The chain crosses the membrane as a helical span at residues 693 to 713 (YITISLTALLFLISASKTLLV). Residues 714–976 (HPFTNSNPLK…LVIVKDAIIL (263 aa)) lie on the Vacuolar side of the membrane. N-linked (GlcNAc...) asparagine glycosylation is found at Asn768, Asn796, Asn811, Asn866, and Asn937.

The protein belongs to the peptidase M28 family. Zn(2+) serves as cofactor.

Its subcellular location is the vacuole membrane. Functionally, may be involved in vacuolar sorting and osmoregulation. The polypeptide is Vacuolar membrane protease (Saccharomyces cerevisiae (strain JAY291) (Baker's yeast)).